The chain runs to 427 residues: Tuberculostearic acid methyltransferase UfaA1 (427 aa).

The protein belongs to the CFA/CMAS family.

Its pathway is lipid metabolism; fatty acid biosynthesis. Inhibited by S-adenosyl-L-homocysteine. Its function is as follows. Involved in the biosynthesis of the tuberculostearic acid (10-methylstearic-acid or TSA), a constituent lipid of the mycobacterial cell wall. Catalyzes the transfer of the methyl group from S-adenosyl-L-methionine (SAM) to the double bond of oleic acid in phosphatidylethanolamine or phosphatidylcholine to produce TSA. This chain is Tuberculostearic acid methyltransferase UfaA1, found in Mycobacterium tuberculosis (strain ATCC 25618 / H37Rv).